Reading from the N-terminus, the 551-residue chain is Colicin-E6 (551 aa).

Disordered stretches follow at residues 1 to 74, 244 to 269, 293 to 317, 406 to 501, and 517 to 551; these read MSGG…SGGG, LSPG…NTRD, PDQV…HPVE, NKQA…WYGD, and EGYR…KKYL. Residues 20–35 are compositionally biased toward gly residues; it reads INGGPTGLGVGGGASD. The span at 36-45 shows a compositional bias: low complexity; that stretch reads GSGWSSENNP. A compositionally biased stretch (gly residues) spans 46 to 74; it reads WGGGSGSGIHWGGGSGHGNGGGNGNSGGG. Basic and acidic residues-rich tracts occupy residues 296 to 317 and 430 to 484; these read VKQR…HPVE and ESRK…EGKP. Residues 455-551 are ribosome inactivating activity; that stretch reads KGVKDYGHDY…DPKRNIKKYL (97 aa). The segment at 530 to 551 is binding of immunity protein; it reads FEPKTGNQLKGPDPKRNIKKYL.

It belongs to the cloacin colicin family.

Its function is as follows. Inactivates ribosomes by hydrolyzing 16S RNA in 30S ribosomes at a specific site. Functionally, colicins are polypeptide toxins produced by and active against E.coli and closely related bacteria. This chain is Colicin-E6, found in Escherichia coli.